The chain runs to 111 residues: Small ribosomal subunit protein bS6 (111 aa).

The protein belongs to the bacterial ribosomal protein bS6 family.

In terms of biological role, binds together with bS18 to 16S ribosomal RNA. The polypeptide is Small ribosomal subunit protein bS6 (Francisella philomiragia subsp. philomiragia (strain ATCC 25017 / CCUG 19701 / FSC 153 / O#319-036)).